A 493-amino-acid polypeptide reads, in one-letter code: Tripartite motif-containing protein 5 (493 aa).

At A2 the chain carries N-acetylalanine. The RING-type zinc finger occupies 15–59 (CPICLELLTQPLSLDCGHSFCQACLTANHKKSTLDKGERSCPVCR). S86 is modified (phosphoserine). The segment at 90–132 (QKVDHCARHGEKLLLFCKEDGKVICWLCERSQEHRGHHTFLTE) adopts a B box-type zinc-finger fold. 4 residues coordinate Zn(2+): C95, H98, C117, and H123. Positions 131-223 (TEEVAQKYQV…LTKSETEMVQ (93 aa)) form a coiled coil. The interval 185–198 (FEQLRDILDWEESN) is required for interaction with GABARAP and for autophagy. The 213-residue stretch at 281–493 (LKGMLEVFRE…VPMTLCSPSS (213 aa)) folds into the B30.2/SPRY domain.

The protein belongs to the TRIM/RBCC family. As to quaternary structure, can form homodimers and homotrimers. In addition to lower-order dimerization, also exhibits a higher-order multimerization and both low- and high-order multimerizations are essential for its restriction activity. Interacts with BTBD1 and BTBD2. Interacts with PSMC4, PSMC5, PSMD7 and HSPA8/HSC70. Interacts (via B30.2/SPRY domain) with HSPA1A/B. Interacts with PSMC2, MAP3K7/TAK1, TAB2 and TAB3. Interacts with SQSTM1. Interacts with TRIM6 and TRIM34. Interacts with ULK1 (phosphorylated form), GABARAP, GABARAPL1, GABARAPL2, MAP1LC3A, MAP1LC3C and BECN1. In terms of processing, degraded in a proteasome-independent fashion in the absence of viral infection but in a proteasome-dependent fashion following exposure to restriction sensitive virus. Post-translationally, autoubiquitinated in a RING finger- and UBE2D2-dependent manner. Monoubiquitinated by TRIM21. Deubiquitinated by Yersinia YopJ. Ubiquitination may not lead to proteasomal degradation.

It is found in the cytoplasm. It localises to the nucleus. It carries out the reaction S-ubiquitinyl-[E2 ubiquitin-conjugating enzyme]-L-cysteine + [acceptor protein]-L-lysine = [E2 ubiquitin-conjugating enzyme]-L-cysteine + N(6)-ubiquitinyl-[acceptor protein]-L-lysine.. It participates in protein modification; protein ubiquitination. Its function is as follows. Capsid-specific restriction factor that prevents infection from non-host-adapted retroviruses. Blocks viral replication early in the life cycle, after viral entry but before reverse transcription. In addition to acting as a capsid-specific restriction factor, also acts as a pattern recognition receptor that activates innate immune signaling in response to the retroviral capsid lattice. Binding to the viral capsid triggers its E3 ubiquitin ligase activity, and in concert with the heterodimeric ubiquitin conjugating enzyme complex UBE2V1-UBE2N (also known as UBC13-UEV1A complex) generates 'Lys-63'-linked polyubiquitin chains, which in turn are catalysts in the autophosphorylation of the MAP3K7/TAK1 complex (includes TAK1, TAB2, and TAB3). Activation of the MAP3K7/TAK1 complex by autophosphorylation results in the induction and expression of NF-kappa-B and MAPK-responsive inflammatory genes, thereby leading to an innate immune response in the infected cell. Plays a role in regulating autophagy through activation of autophagy regulator BECN1 by causing its dissociation from its inhibitors BCL2 and TAB2. In Pongo pygmaeus (Bornean orangutan), this protein is Tripartite motif-containing protein 5 (TRIM5).